Reading from the N-terminus, the 505-residue chain is AMP phosphorylase (505 aa).

Residues G169, 195-200, and T204 contribute to the AMP site; that span reads SRAITG. The active-site Proton donor is D257. AMP-binding residues include S265 and K289.

It belongs to the thymidine/pyrimidine-nucleoside phosphorylase family. Type 2 subfamily.

The enzyme catalyses AMP + phosphate = alpha-D-ribose 1,5-bisphosphate + adenine. It catalyses the reaction CMP + phosphate = cytosine + alpha-D-ribose 1,5-bisphosphate. The catalysed reaction is UMP + phosphate = alpha-D-ribose 1,5-bisphosphate + uracil. Functionally, catalyzes the conversion of AMP and phosphate to adenine and ribose 1,5-bisphosphate (R15P). Exhibits phosphorylase activity toward CMP and UMP in addition to AMP. Functions in an archaeal AMP degradation pathway, together with R15P isomerase and RubisCO. The protein is AMP phosphorylase of Methanocorpusculum labreanum (strain ATCC 43576 / DSM 4855 / Z).